Here is a 706-residue protein sequence, read N- to C-terminus: Histone deacetylase HDA1 (706 aa).

Positions 1 to 24 are enriched in basic and acidic residues; it reads MDSVMVKKEVLENPDHDLKRKLEE. Positions 1–36 are disordered; the sequence is MDSVMVKKEVLENPDHDLKRKLEENKEEENSLSTTS. A histone deacetylase region spans residues 67–396; that stretch reads RYHAKIFTSY…ALSVAKVLIG (330 aa). His-206 is a catalytic residue.

This sequence belongs to the histone deacetylase family. HD type 2 subfamily.

The protein resides in the nucleus. The catalysed reaction is N(6)-acetyl-L-lysyl-[histone] + H2O = L-lysyl-[histone] + acetate. Responsible for the deacetylation of lysine residues on the N-terminal part of the core histones (H2A, H2B, H3 and H4). Histone deacetylation gives a tag for epigenetic repression and plays an important role in transcriptional regulation, cell cycle progression and developmental events. Histone deacetylases act via the formation of large multiprotein complexes. The chain is Histone deacetylase HDA1 (HDA1) from Saccharomyces cerevisiae (strain ATCC 204508 / S288c) (Baker's yeast).